We begin with the raw amino-acid sequence, 246 residues long: Ribonuclease 3 (246 aa).

The RNase III domain maps to 18-147; it reads FKELQKKIGI…FIGALYLDQG (130 aa). Glu60 lines the Mg(2+) pocket. Residue Asp64 is part of the active site. Asp133 and Glu136 together coordinate Mg(2+). Glu136 is an active-site residue. The DRBM domain maps to 173–242; the sequence is DFKSQLQELV…AQMALQKLKT (70 aa).

This sequence belongs to the ribonuclease III family. In terms of assembly, homodimer. Mg(2+) serves as cofactor.

It localises to the cytoplasm. The enzyme catalyses Endonucleolytic cleavage to 5'-phosphomonoester.. Digests double-stranded RNA. Involved in the processing of primary rRNA transcript to yield the immediate precursors to the large and small rRNAs (23S and 16S). Processes some mRNAs, and tRNAs when they are encoded in the rRNA operon. Processes pre-crRNA and tracrRNA of type II CRISPR loci if present in the organism. This is Ribonuclease 3 from Geobacillus sp. (strain WCH70).